The sequence spans 765 residues: Phosphoribosylformylglycinamidine synthase subunit PurL (765 aa).

H57 is a catalytic residue. ATP is bound by residues Y60 and R104. E106 contributes to the Mg(2+) binding site. Residues 107–110 and R129 each bind substrate; that span reads SHNH. H108 functions as the Proton acceptor in the catalytic mechanism. D130 lines the Mg(2+) pocket. A substrate-binding site is contributed by Q254. Residue D282 participates in Mg(2+) binding. 326 to 328 contacts substrate; sequence ESQ. Residues N508 and G545 each coordinate ATP. N546 lines the Mg(2+) pocket. S548 lines the substrate pocket.

The protein belongs to the FGAMS family. In terms of assembly, monomer. Part of the FGAM synthase complex composed of 1 PurL, 1 PurQ and 2 PurS subunits.

Its subcellular location is the cytoplasm. The catalysed reaction is N(2)-formyl-N(1)-(5-phospho-beta-D-ribosyl)glycinamide + L-glutamine + ATP + H2O = 2-formamido-N(1)-(5-O-phospho-beta-D-ribosyl)acetamidine + L-glutamate + ADP + phosphate + H(+). It participates in purine metabolism; IMP biosynthesis via de novo pathway; 5-amino-1-(5-phospho-D-ribosyl)imidazole from N(2)-formyl-N(1)-(5-phospho-D-ribosyl)glycinamide: step 1/2. Functionally, part of the phosphoribosylformylglycinamidine synthase complex involved in the purines biosynthetic pathway. Catalyzes the ATP-dependent conversion of formylglycinamide ribonucleotide (FGAR) and glutamine to yield formylglycinamidine ribonucleotide (FGAM) and glutamate. The FGAM synthase complex is composed of three subunits. PurQ produces an ammonia molecule by converting glutamine to glutamate. PurL transfers the ammonia molecule to FGAR to form FGAM in an ATP-dependent manner. PurS interacts with PurQ and PurL and is thought to assist in the transfer of the ammonia molecule from PurQ to PurL. This Corynebacterium aurimucosum (strain ATCC 700975 / DSM 44827 / CIP 107346 / CN-1) (Corynebacterium nigricans) protein is Phosphoribosylformylglycinamidine synthase subunit PurL.